The chain runs to 356 residues: Glutamine synthetase PR-1 (356 aa).

Residues 19 to 99 (VIAEYIWIGG…VICDAYTPAG (81 aa)) form the GS beta-grasp domain. Residues 41-64 (PGPVKNPSELPKWNYDGSSTGQAP) form a disordered region. The region spanning 106–356 (KRHNAAKIFS…IADTTILWKP (251 aa)) is the GS catalytic domain.

Belongs to the glutamine synthetase family. As to quaternary structure, homooctamer. As to expression, roots.

It is found in the cytoplasm. The enzyme catalyses L-glutamate + NH4(+) + ATP = L-glutamine + ADP + phosphate + H(+). This Phaseolus vulgaris (Kidney bean) protein is Glutamine synthetase PR-1.